Consider the following 175-residue polypeptide: Lipopolysaccharide export system protein LptH (175 aa).

Positions 1–24 (MRFVNTLPLIFGLTAALGSSMALA) are cleaved as a signal peptide.

The protein belongs to the LptA family. As to quaternary structure, component of the lipopolysaccharide transport and assembly complex. Mainly exists as a dimer in solution. Tends to oligomerize already in solution. The protomers follow one another in a head-to-tail fashion throughout the crystal lattice, yielding a continuous fiber arrangement.

Its subcellular location is the periplasm. In terms of biological role, involved in the assembly of lipopolysaccharide (LPS). Required for the translocation of LPS from the inner membrane to the outer membrane. May form a bridge between the inner membrane and the outer membrane, via interactions with LptC and LptD, thereby facilitating LPS transfer across the periplasm. Binds LPS. Important for cell envelope stability and essential for growth, cell viability and ability to cause infection in different animal models. The chain is Lipopolysaccharide export system protein LptH from Pseudomonas aeruginosa (strain ATCC 15692 / DSM 22644 / CIP 104116 / JCM 14847 / LMG 12228 / 1C / PRS 101 / PAO1).